The chain runs to 95 residues: Aspartyl/glutamyl-tRNA(Asn/Gln) amidotransferase subunit C (95 aa).

This sequence belongs to the GatC family. As to quaternary structure, heterotrimer of A, B and C subunits.

The enzyme catalyses L-glutamyl-tRNA(Gln) + L-glutamine + ATP + H2O = L-glutaminyl-tRNA(Gln) + L-glutamate + ADP + phosphate + H(+). It carries out the reaction L-aspartyl-tRNA(Asn) + L-glutamine + ATP + H2O = L-asparaginyl-tRNA(Asn) + L-glutamate + ADP + phosphate + 2 H(+). Allows the formation of correctly charged Asn-tRNA(Asn) or Gln-tRNA(Gln) through the transamidation of misacylated Asp-tRNA(Asn) or Glu-tRNA(Gln) in organisms which lack either or both of asparaginyl-tRNA or glutaminyl-tRNA synthetases. The reaction takes place in the presence of glutamine and ATP through an activated phospho-Asp-tRNA(Asn) or phospho-Glu-tRNA(Gln). This is Aspartyl/glutamyl-tRNA(Asn/Gln) amidotransferase subunit C from Sinorhizobium fredii (strain NBRC 101917 / NGR234).